A 55-amino-acid polypeptide reads, in one-letter code: Large ribosomal subunit protein bL33 (55 aa).

This sequence belongs to the bacterial ribosomal protein bL33 family.

The protein is Large ribosomal subunit protein bL33 of Methylorubrum extorquens (strain CM4 / NCIMB 13688) (Methylobacterium extorquens).